The chain runs to 201 residues: Glycerol-3-phosphate acyltransferase (201 aa).

5 consecutive transmembrane segments (helical) span residues 5–25 (LLGA…FGVV), 55–75 (KMGV…ILLA), 88–108 (WSTA…WLGF), 118–138 (LGIF…GYAV), and 164–184 (TYGV…LIFL).

This sequence belongs to the PlsY family. Probably interacts with PlsX.

The protein localises to the cell inner membrane. It carries out the reaction an acyl phosphate + sn-glycerol 3-phosphate = a 1-acyl-sn-glycero-3-phosphate + phosphate. It participates in lipid metabolism; phospholipid metabolism. Its function is as follows. Catalyzes the transfer of an acyl group from acyl-phosphate (acyl-PO(4)) to glycerol-3-phosphate (G3P) to form lysophosphatidic acid (LPA). This enzyme utilizes acyl-phosphate as fatty acyl donor, but not acyl-CoA or acyl-ACP. The polypeptide is Glycerol-3-phosphate acyltransferase (Anaeromyxobacter dehalogenans (strain 2CP-C)).